The following is a 530-amino-acid chain: Hyccin 2 (530 aa).

2 positions are modified to phosphothreonine: Thr-30 and Thr-306. Phosphoserine occurs at positions 321 and 341. The tract at residues 328-404 is disordered; it reads RREGAEGLNG…SNESPRDSVV (77 aa). Residues 353 to 373 are compositionally biased toward polar residues; it reads SGASLSSQPHGTKPPSSSQRG. 4 positions are modified to phosphoserine: Ser-430, Ser-442, Ser-444, and Ser-491. A disordered region spans residues 502 to 530; that stretch reads EGKELLSPGAPLTKQSRSPSFNMQLISQV. Residues 514–530 show a composition bias toward polar residues; that stretch reads TKQSRSPSFNMQLISQV.

Belongs to the Hyccin family. Component of a phosphatidylinositol 4-kinase (PI4K) complex, composed of PI4KA, EFR3 (EFR3A or EFR3B), TTC7 (TTC7A or TTC7B) and HYCC (HYCC1 or HYCC2). In terms of tissue distribution, expressed in the central nervous system. Expressed at much lower level in oligodendrocytes than in neurons.

Its subcellular location is the cytoplasm. It localises to the cytosol. It is found in the cell membrane. Its function is as follows. Component of a complex required to localize phosphatidylinositol 4-kinase (PI4K) to the plasma membrane. This is Hyccin 2 (Hycc2) from Mus musculus (Mouse).